The following is a 728-amino-acid chain: MNQPDLADDPDPSPEPLCIVCGQNHSPEENHFYTYTEDVDDDLICHICLQALLDPLDTPCGHTYCTLCLTNFLVEKDFCPVDRKPVVLQHCKKSSILVNKLLNKLLVTCPFTEHCTEVLQRCDLQHHFQTSCKGASHYGLTKDRKRRSQDGCPDGCASLMATTLSPEVSAAATISLMTDEPGLDNPAYVSSVEDGEPVANSSDSGRSNRTRARPFERSTMRSRSFKKINRALSALRRTKSGSVVANHVDQGRDNSENTTVPEVFPRLFHLIPDGEITSIKINRADPSESLSIRLVGGSETPLVHIIIQHIYRDGVIARDGRLLPGDIILKVNGMDISNVPHNYAVRLLRQPCQVLRLTVLREQKFRSRSNAHVPDSYGPRDDSFHVILNKSSPEEQLGIKLVRRVDEPGVFIFNVLNGGVADRHGQLEENDRVLAINGHDLRFGSPESAAHLIQASERRVHLVVSRQVRQSSPDIFQEAGWISNGQQSPGPGERNTASKPAATCHEKVVSVWKDPSESLGMTVGGGASHREWDLPIYVISVEPGGVISRDGRIKTGDILLNVNGIELTEVSRTEAVAILKSAPSSVVLKALEVKEQEAQEDCSPAALDSNHNVTPPGDWSPSWVMWLELPQYLCNCKDVILRRNTAGSLGFCIVGGYEEYSGNKPFFIKSIVEGTPAYNDGRIRCGDILLAVNGRSTSGMIHACLARMLKELKGRITLTIASWPGTFL.

An RING-type zinc finger spans residues 45–83 (CHICLQALLDPLDTPCGHTYCTLCLTNFLVEKDFCPVDR). The NPXY motif motif lies at 185–188 (NPAY). Residues 185–220 (NPAYVSSVEDGEPVANSSDSGRSNRTRARPFERSTM) form a disordered region. The interaction with MAGEB18 stretch occupies residues 186 to 244 (PAYVSSVEDGEPVANSSDSGRSNRTRARPFERSTMRSRSFKKINRALSALRRTKSGSVV). 2 consecutive PDZ domains span residues 278 to 362 (SIKI…VLRE) and 385 to 467 (HVIL…VSRQ). Position 445 is a phosphoserine (serine 445). The tract at residues 481-500 (WISNGQQSPGPGERNTASKP) is disordered. PDZ domains lie at 508-593 (VVSV…ALEV) and 638-723 (DVIL…IASW).

In terms of assembly, interacts with CXADR. Interacts with MAGEB18 and MAGEF1. Interacts with the phosphotyrosine interaction domain of all isoforms of NUMB. IGSF5/JAM4 interacts with isoform 2 through the second PDZ domain, other isoforms may also interact with IGSF5/JAM4. Isoform 1 and isoform 2 are expressed in the heart. Isoform 1 is also expressed in kidney, lung and skeletal muscle while isoform 2 is also expressed in brain.

It localises to the cytoplasm. The catalysed reaction is S-ubiquitinyl-[E2 ubiquitin-conjugating enzyme]-L-cysteine + [acceptor protein]-L-lysine = [E2 ubiquitin-conjugating enzyme]-L-cysteine + N(6)-ubiquitinyl-[acceptor protein]-L-lysine.. Its pathway is protein modification; protein ubiquitination. In terms of biological role, E3 ubiquitin-protein ligase that mediates ubiquitination and subsequent proteasomal degradation of NUMB. E3 ubiquitin ligases accept ubiquitin from an E2 ubiquitin-conjugating enzyme in the form of a thioester and then directly transfers the ubiquitin to targeted substrates. Mediates ubiquitination of isoform p66 and isoform p72 of NUMB, but not that of isoform p71 or isoform p65. Isoform 2 provides an endocytic scaffold for IGSF5/JAM4. The chain is E3 ubiquitin-protein ligase LNX (Lnx1) from Mus musculus (Mouse).